We begin with the raw amino-acid sequence, 97 residues long: Small ribosomal subunit protein uS19 (97 aa).

Residues 74-97 (FSPTRRFGGHPDKKAVKGKIEKQG) are disordered. Residues 82 to 97 (GHPDKKAVKGKIEKQG) are compositionally biased toward basic and acidic residues.

This sequence belongs to the universal ribosomal protein uS19 family.

Functionally, protein S19 forms a complex with S13 that binds strongly to the 16S ribosomal RNA. This chain is Small ribosomal subunit protein uS19, found in Petrotoga mobilis (strain DSM 10674 / SJ95).